Reading from the N-terminus, the 94-residue chain is Immune protein Tsi6 (94 aa).

Functionally, immunity protein that plays a role in preventing early activation of toxin Tse6. The protein is Immune protein Tsi6 of Pseudomonas aeruginosa (strain ATCC 15692 / DSM 22644 / CIP 104116 / JCM 14847 / LMG 12228 / 1C / PRS 101 / PAO1).